We begin with the raw amino-acid sequence, 1109 residues long: Coiled-coil domain-containing protein 158 (1109 aa).

The segment covering 1 to 12 (MESKACESKNED) has biased composition (basic and acidic residues). A disordered region spans residues 1–31 (MESKACESKNEDLLPSGITSKGGSSSPFFVT). Positions 17-31 (GITSKGGSSSPFFVT) are enriched in polar residues. 2 coiled-coil regions span residues 71–166 (GKEH…MLKD) and 242–828 (VEDQ…QEQE). Disordered stretches follow at residues 843 to 897 (LQGP…DPTR) and 952 to 1061 (HRSN…TGKT). 3 stretches are compositionally biased toward polar residues: residues 862-882 (ASVTRSHSNIPSSQSTTSFLS), 953-970 (RSNNSLRESTEGSKSSET), and 988-998 (SCFTFTSTASP). The segment covering 999 to 1019 (SGKMSASRSFSSSPKKSPVHS) has biased composition (low complexity). 2 stretches are compositionally biased toward polar residues: residues 1020–1037 (LLTSSAEESVNSTPQYRS) and 1043–1061 (SPTSAKDSQSPSLETTGKT). A coiled-coil region spans residues 1053-1109 (PSLETTGKTCQKLQNRLESLQTLVEDLQLKNQAMSSMIRNQEKRIQKVKDQEKMLLK).

The chain is Coiled-coil domain-containing protein 158 (Ccdc158) from Mus musculus (Mouse).